The primary structure comprises 234 residues: uncharacterized protein (234 aa).

Helical transmembrane passes span 22-42, 59-79, 154-174, and 186-206; these read TFLN…IPLI, INWA…AYLI, FWIF…IFFC, and LLSL…IFAL.

It is found in the cell membrane. This is an uncharacterized protein from Escherichia coli (strain K12).